A 955-amino-acid chain; its full sequence is MAM domain-containing glycosylphosphatidylinositol anchor protein 1 (955 aa).

An N-terminal signal peptide occupies residues 1–18 (MEVTCLLLLALIPFHCRG). Ig-like domains lie at 24 to 123 (PAQA…KSIR) and 132 to 230 (PMLT…KAIT). Asparagine 42 and asparagine 90 each carry an N-linked (GlcNAc...) asparagine glycan. Cystine bridges form between cysteine 60-cysteine 108 and cysteine 157-cysteine 214. N-linked (GlcNAc...) asparagine glycans are attached at residues asparagine 235, asparagine 247, asparagine 257, asparagine 307, and asparagine 331. Residues 240–323 (PALKLSVNET…VGNPAKKTVN (84 aa)) enclose the Ig-like 3 domain. Residues cysteine 262 and cysteine 308 are joined by a disulfide bond. Ig-like domains are found at residues 338-432 (PDVI…VEVN), 440-532 (PTIS…AQVQ), and 539-631 (PEVE…FQVS). A disulfide bond links cysteine 357 and cysteine 415. Asparagine 432 carries N-linked (GlcNAc...) asparagine glycosylation. 2 disulfides stabilise this stretch: cysteine 463–cysteine 514 and cysteine 560–cysteine 615. Residues 643 to 743 (TPNPTRSHKL…SRIIHYTEPI (101 aa)) enclose the Fibronectin type-III domain. N-linked (GlcNAc...) asparagine glycosylation is found at asparagine 655 and asparagine 747. In terms of domain architecture, MAM spans 751-918 (NTCHFEDEKI…VTLKKGECPR (168 aa)). Residues 779 to 788 (LTQNPKRSPN) are compositionally biased toward polar residues. The tract at residues 779–798 (LTQNPKRSPNTGPPTDISGT) is disordered. An N-linked (GlcNAc...) asparagine glycan is attached at asparagine 826. Serine 932 is lipidated: GPI-anchor amidated serine. Positions 933–955 (GAPCQSSPQLWGPMAIFLLALQR) are cleaved as a propeptide — removed in mature form.

Interacts heterophilically through its MAM domain with proteins in axon-rich regions and through its Ig-like domains with proteins in differentiating muscle. Interacts (through the Ig-like domains) with NLGN2. Has been found in brain, heart, skeletal muscle and kidney. Found to be overexpressed in tumor tissues.

The protein localises to the cell membrane. Required for radial migration of cortical neurons in the superficial layer of the neocortex. Plays a role in the formation or maintenance of inhibitory synapses. May function by inhibiting the activity of NLGN2. This Homo sapiens (Human) protein is MAM domain-containing glycosylphosphatidylinositol anchor protein 1 (MDGA1).